The following is a 518-amino-acid chain: uncharacterized protein (518 aa).

ABC transporter domains are found at residues 4–260 (LSVK…QLEA) and 324–518 (LIFE…TKVL). Residues 36–43 (GANGEGKS) and 357–364 (GANGIGKT) each bind ATP.

Belongs to the ABC transporter superfamily.

This is an uncharacterized protein from Bacillus subtilis (strain 168).